The primary structure comprises 374 residues: uncharacterized protein (374 aa).

A coiled-coil region spans residues 298-332 (TKEKLLKLHSEQKSLSEKINKLSGEKDIEQSMINN).

This is an uncharacterized protein from Acanthamoeba polyphaga (Amoeba).